The chain runs to 1368 residues: DNA-directed RNA polymerase subunit beta' (1368 aa).

A disordered region spans residues 1 to 38 (MTSSSKPARKTSKSKSKASKAAEAPAAPSNELSREAPT). Residues 7 to 18 (PARKTSKSKSKA) show a composition bias toward basic residues. The segment covering 19 to 29 (SKAAEAPAAPS) has biased composition (low complexity). Zn(2+)-binding residues include cysteine 250, cysteine 318, cysteine 325, and cysteine 328. The segment at 1340 to 1368 (AGEELAEEHVPDPGALEGLQEEGLLSQDS) is disordered. Over residues 1353–1368 (GALEGLQEEGLLSQDS) the composition is skewed to low complexity.

The protein belongs to the RNA polymerase beta' chain family. RpoC2 subfamily. In terms of assembly, in cyanobacteria the RNAP catalytic core is composed of 2 alpha, 1 beta, 1 beta', 1 gamma and 1 omega subunit. When a sigma factor is associated with the core the holoenzyme is formed, which can initiate transcription. Requires Zn(2+) as cofactor.

The catalysed reaction is RNA(n) + a ribonucleoside 5'-triphosphate = RNA(n+1) + diphosphate. Functionally, DNA-dependent RNA polymerase catalyzes the transcription of DNA into RNA using the four ribonucleoside triphosphates as substrates. This chain is DNA-directed RNA polymerase subunit beta', found in Synechococcus sp. (strain RCC307).